The following is a 272-amino-acid chain: Glutamate racemase (272 aa).

Residues Asp-9–Ser-10 and Tyr-41–Gly-42 each bind substrate. The active-site Proton donor/acceptor is the Cys-73. Asn-74 to Thr-75 lines the substrate pocket. Residue Cys-183 is the Proton donor/acceptor of the active site. Thr-184–His-185 contributes to the substrate binding site.

The protein belongs to the aspartate/glutamate racemases family.

It catalyses the reaction L-glutamate = D-glutamate. Its pathway is cell wall biogenesis; peptidoglycan biosynthesis. In terms of biological role, provides the (R)-glutamate required for cell wall biosynthesis. In Shewanella sp. (strain MR-7), this protein is Glutamate racemase.